Consider the following 516-residue polypeptide: H/ACA ribonucleoprotein complex subunit DKC1 (516 aa).

The segment at 1–24 (MADGDGSSVKKRRKKDKRSLPDED) is disordered. Asp123 functions as the Nucleophile in the catalytic mechanism. The 76-residue stretch at 294–369 (HKRLVMKDSA…VVAKIKRVIM (76 aa)) folds into the PUA domain. Residues 422-516 (KKEAAKVPQA…KQKEVEESSE (95 aa)) are disordered. Basic and acidic residues predominate over residues 434 to 446 (EVERAPKRKRESE). Pro residues predominate over residues 453–464 (SPPPSPATPPPE). The stretch at 463 to 516 (PEELSKKEKKKKKKEKKAKEAAESGEEQVEVISESSAKKKKKKKKQKEVEESSE) forms a coiled coil. Over residues 469-478 (KEKKKKKKEK) the composition is skewed to basic residues.

This sequence belongs to the pseudouridine synthase TruB family. In terms of assembly, part of the H/ACA small nucleolar ribonucleoprotein (H/ACA snoRNP) complex, which contains NHP2/NOLA2, GAR1/NOLA1, NOP10/NOLA3, and DKC1/NOLA4, which is presumed to be the catalytic subunit. The complex contains a stable core formed by binding of one or two NOP10-DKC1 heterodimers to NHP2; GAR1 subsequently binds to this core via DKC1. The complex binds a box H/ACA small nucleolar RNA (snoRNA), which may target the specific site of modification within the RNA substrate.

Its subcellular location is the nucleus. The protein localises to the nucleolus. It is found in the cajal body. The enzyme catalyses uridine in 5S rRNA = pseudouridine in 5S rRNA. Functionally, catalytic subunit of H/ACA small nucleolar ribonucleoprotein (H/ACA snoRNP) complex, which catalyzes pseudouridylation of rRNA. This involves the isomerization of uridine such that the ribose is subsequently attached to C5, instead of the normal N1. Each rRNA can contain up to 100 pseudouridine ('psi') residues, which may serve to stabilize the conformation of rRNAs. Required for ribosome biogenesis and telomere maintenance. The sequence is that of H/ACA ribonucleoprotein complex subunit DKC1 (DKC1) from Gallus gallus (Chicken).